An 81-amino-acid chain; its full sequence is Cell division protein ZapB (81 aa).

Residues 5 to 81 are a coiled coil; sequence LEVFEKLESK…QALLGRMEEV (77 aa). Residues 43–64 form a disordered region; it reads VQSAQHGREELERENSQLKEQQ. Over residues 48–59 the composition is skewed to basic and acidic residues; sequence HGREELERENSQ.

This sequence belongs to the ZapB family. As to quaternary structure, homodimer. The ends of the coiled-coil dimer bind to each other, forming polymers. Interacts with FtsZ.

It is found in the cytoplasm. Its function is as follows. Non-essential, abundant cell division factor that is required for proper Z-ring formation. It is recruited early to the divisome by direct interaction with FtsZ, stimulating Z-ring assembly and thereby promoting cell division earlier in the cell cycle. Its recruitment to the Z-ring requires functional FtsA or ZipA. The polypeptide is Cell division protein ZapB (Klebsiella pneumoniae subsp. pneumoniae (strain ATCC 700721 / MGH 78578)).